A 504-amino-acid chain; its full sequence is Anthocyanidin 3-O-glucoside 5-O-glucosyltransferase (504 aa).

H23 acts as the Proton acceptor in catalysis. H23 provides a ligand contact to an anthocyanidin. The tract at residues 107 to 126 (TKKGQGQGQGQGQGQGQGQG) is disordered. Gly residues predominate over residues 111–125 (QGQGQGQGQGQGQGQ). UDP-alpha-D-glucose contacts are provided by T157, Q377, H392, W395, N396, S397, E400, D416, and Q417.

Belongs to the UDP-glycosyltransferase family. As to expression, predominantly expressed in petals and weakly in filaments. Not expressed in leaves, stems and other floral organs.

It carries out the reaction an anthocyanidin 3-O-beta-D-glucoside + UDP-alpha-D-glucose = an anthocyanidin 3,5-di-O-beta-D-glucoside + UDP + 2 H(+). Its pathway is pigment biosynthesis; anthocyanin biosynthesis. In terms of biological role, catalyzes the glucosylation at the O-5 position of anthocyanidin 3-glucosides to form anthocyanidin 3,5-di-O-glucosides using UDP-glucose as sugar donor. Anthocyanidin 3,5-di-O-glucosides are molecules that are responsible for pigmentation. Involved in biosynsthesis of accumulate gentiodelphin, a unique polyacylated delphinidin-type anthocyanin, in the petals. Also acts on anthocyanidin 3-O-(6-O-malonylglucoside). Much less active with hydroxycinnamoylglucose derivatives. No activity in the absence of the 3-O-glucoside group. This chain is Anthocyanidin 3-O-glucoside 5-O-glucosyltransferase (5GT7), found in Gentiana triflora (Clustered gentian).